We begin with the raw amino-acid sequence, 311 residues long: HPr kinase/phosphorylase (311 aa).

Catalysis depends on residues H138 and K159. ATP is bound at residue 153-160; the sequence is GDSGIGKS. S160 serves as a coordination point for Mg(2+). The Proton acceptor; for phosphorylation activity. Proton donor; for dephosphorylation activity role is filled by D177. The important for the catalytic mechanism of both phosphorylation and dephosphorylation stretch occupies residues 201–210; sequence IEIRGVGIID. E202 provides a ligand contact to Mg(2+). The active site involves R243. The important for the catalytic mechanism of dephosphorylation stretch occupies residues 264–269; that stretch reads PVKTGR.

It belongs to the HPrK/P family. In terms of assembly, homohexamer. The cofactor is Mg(2+).

It catalyses the reaction [HPr protein]-L-serine + ATP = [HPr protein]-O-phospho-L-serine + ADP + H(+). The enzyme catalyses [HPr protein]-O-phospho-L-serine + phosphate + H(+) = [HPr protein]-L-serine + diphosphate. Its function is as follows. Catalyzes the ATP- as well as the pyrophosphate-dependent phosphorylation of a specific serine residue in HPr, a phosphocarrier protein of the phosphoenolpyruvate-dependent sugar phosphotransferase system (PTS). HprK/P also catalyzes the pyrophosphate-producing, inorganic phosphate-dependent dephosphorylation (phosphorolysis) of seryl-phosphorylated HPr (P-Ser-HPr). The two antagonistic activities of HprK/P are regulated by several intracellular metabolites, which change their concentration in response to the absence or presence of rapidly metabolisable carbon sources (glucose, fructose, etc.) in the growth medium. Therefore, by controlling the phosphorylation state of HPr, HPrK/P is a sensor enzyme that plays a major role in the regulation of carbon metabolism and sugar transport: it mediates carbon catabolite repression (CCR), and regulates PTS-catalyzed carbohydrate uptake and inducer exclusion. The protein is HPr kinase/phosphorylase of Streptococcus pneumoniae (strain 70585).